The primary structure comprises 209 residues: Ion-translocating oxidoreductase complex subunit G (209 aa).

Residues 9-29 (GLVLAIFACASTGLVAVTHYL) traverse the membrane as a helical segment. Threonine 175 carries the FMN phosphoryl threonine modification.

It belongs to the RnfG family. The complex is composed of six subunits: RnfA, RnfB, RnfC, RnfD, RnfE and RnfG. The cofactor is FMN.

The protein localises to the cell inner membrane. Its function is as follows. Part of a membrane-bound complex that couples electron transfer with translocation of ions across the membrane. The protein is Ion-translocating oxidoreductase complex subunit G of Vibrio atlanticus (strain LGP32) (Vibrio splendidus (strain Mel32)).